Reading from the N-terminus, the 24-residue chain is Tryptophanase operon leader peptide (24 aa).

In Escherichia coli O157:H7, this protein is Tryptophanase operon leader peptide (tnaL).